The sequence spans 279 residues: Pantothenate synthetase (279 aa).

An ATP-binding site is contributed by 26–33; it reads MGNLHDGH. The Proton donor role is filled by His-33. Residue Gln-57 coordinates (R)-pantoate. Position 57 (Gln-57) interacts with beta-alanine. Residue 144–147 coordinates ATP; that stretch reads GKKD. Position 150 (Gln-150) interacts with (R)-pantoate. 181–184 serves as a coordination point for ATP; it reads LSSR.

The protein belongs to the pantothenate synthetase family. As to quaternary structure, homodimer.

The protein localises to the cytoplasm. It catalyses the reaction (R)-pantoate + beta-alanine + ATP = (R)-pantothenate + AMP + diphosphate + H(+). It participates in cofactor biosynthesis; (R)-pantothenate biosynthesis; (R)-pantothenate from (R)-pantoate and beta-alanine: step 1/1. Its function is as follows. Catalyzes the condensation of pantoate with beta-alanine in an ATP-dependent reaction via a pantoyl-adenylate intermediate. The sequence is that of Pantothenate synthetase from Janthinobacterium sp. (strain Marseille) (Minibacterium massiliensis).